Here is a 269-residue protein sequence, read N- to C-terminus: Flagellar brake protein YcgR (269 aa).

Residues 134–254 (QRRNFYRVTT…SRLLIQRYIT (121 aa)) form the PilZ domain.

It belongs to the YcgR family. As to quaternary structure, monomer. Interacts with the flagellar basal bodies.

The protein localises to the bacterial flagellum basal body. Functionally, acts as a flagellar brake, regulating swimming and swarming in a bis-(3'-5') cyclic diguanylic acid (c-di-GMP)-dependent manner. Binds 1 c-di-GMP dimer per subunit. Increasing levels of c-di-GMP lead to decreased motility. In Nitrosomonas eutropha (strain DSM 101675 / C91 / Nm57), this protein is Flagellar brake protein YcgR.